The following is a 46-amino-acid chain: uncharacterized protein (46 aa).

Its subcellular location is the mitochondrion. This is an uncharacterized protein from Saccharomyces cerevisiae (strain ATCC 204508 / S288c) (Baker's yeast).